Here is an 80-residue protein sequence, read N- to C-terminus: Putative defensin-like protein 23 (80 aa).

The N-terminal stretch at 1 to 25 (MTTTMKIMSFAMLLVLLFSIDVVEG) is a signal peptide. Intrachain disulfides connect cysteine 31–cysteine 80, cysteine 41–cysteine 66, cysteine 50–cysteine 76, and cysteine 54–cysteine 78.

Belongs to the DEFL family.

The protein localises to the secreted. This chain is Putative defensin-like protein 23, found in Arabidopsis thaliana (Mouse-ear cress).